A 271-amino-acid chain; its full sequence is MKDRIERAAAFIKQNLPESPKIGLILGSGLGILADEIENPVKLKYEDIPEFPVSTVEGHAGQLVLGTLEGVSVIAMQGRFHFYEGYSMEKVTFPVRVMKALGVEALIVTNAAGGVNTEFRAGDLMIITDHINFMGTNPLIGPNEADFGARFPDMSSAYDKDLSSLAEKIAKDLNIPIQKGVYTAVTGPSYETPAEVRFLRTMGSDAVGMSTVPEVIVANHAGMRVLGISCISNAAAGILDQPLSHDEVMEVTEKVKAGFLKLVKAIVAQYE.

Residues Ser-28, His-59, 79 to 81 (RFH), and Ala-111 contribute to the phosphate site. Ser-28 is subject to Phosphoserine. Glu-191 serves as a coordination point for a purine D-ribonucleoside. Phosphate is bound at residue Ser-210. Asn-233 contacts a purine D-ribonucleoside.

This sequence belongs to the PNP/MTAP phosphorylase family. As to quaternary structure, homotrimer.

It catalyses the reaction a purine 2'-deoxy-D-ribonucleoside + phosphate = a purine nucleobase + 2-deoxy-alpha-D-ribose 1-phosphate. Its pathway is purine metabolism; purine nucleoside salvage. In terms of biological role, the purine nucleoside phosphorylases catalyze the phosphorolytic breakdown of the N-glycosidic bond in the beta-(deoxy)ribonucleoside molecules, with the formation of the corresponding free purine bases and pentose-1-phosphate. Cleaves guanosine, inosine, 2'-deoxyguanosine and 2'-deoxyinosine. This chain is Purine nucleoside phosphorylase 1 (punA), found in Bacillus subtilis (strain 168).